Here is a 283-residue protein sequence, read N- to C-terminus: Bifunctional protein FolD (283 aa).

NADP(+) is bound by residues 165 to 167 (GRS) and Ser-190.

The protein belongs to the tetrahydrofolate dehydrogenase/cyclohydrolase family. In terms of assembly, homodimer.

The catalysed reaction is (6R)-5,10-methylene-5,6,7,8-tetrahydrofolate + NADP(+) = (6R)-5,10-methenyltetrahydrofolate + NADPH. It catalyses the reaction (6R)-5,10-methenyltetrahydrofolate + H2O = (6R)-10-formyltetrahydrofolate + H(+). It functions in the pathway one-carbon metabolism; tetrahydrofolate interconversion. Its function is as follows. Catalyzes the oxidation of 5,10-methylenetetrahydrofolate to 5,10-methenyltetrahydrofolate and then the hydrolysis of 5,10-methenyltetrahydrofolate to 10-formyltetrahydrofolate. This is Bifunctional protein FolD from Variovorax paradoxus (strain S110).